The following is a 124-amino-acid chain: Large ribosomal subunit protein bL12 (124 aa).

This sequence belongs to the bacterial ribosomal protein bL12 family. In terms of assembly, homodimer. Part of the ribosomal stalk of the 50S ribosomal subunit. Forms a multimeric L10(L12)X complex, where L10 forms an elongated spine to which 2 to 4 L12 dimers bind in a sequential fashion. Binds GTP-bound translation factors.

Its function is as follows. Forms part of the ribosomal stalk which helps the ribosome interact with GTP-bound translation factors. Is thus essential for accurate translation. The chain is Large ribosomal subunit protein bL12 from Bacteroides thetaiotaomicron (strain ATCC 29148 / DSM 2079 / JCM 5827 / CCUG 10774 / NCTC 10582 / VPI-5482 / E50).